Here is a 471-residue protein sequence, read N- to C-terminus: Protein translocase subunit SecF (471 aa).

The segment at 1 to 29 is disordered; sequence MVSRAKVGAETTKGIDEPDRNDNTDDNGA. The segment covering 13–23 has biased composition (basic and acidic residues); it reads KGIDEPDRNDN. Helical transmembrane passes span 88–108, 211–231, 242–262, 267–287, 325–345, and 355–375; these read GGVIVAVAVLSIIVRGFTFGI, ITKKVVIALVVFLVLVGLYIT, ALTTMCFDLTVTAGVYSLVGF, ATVIGLLTILGFSLYDTVIVF, LISVLPVLALMVVAVWLLGVG, and LVGIIVGTYSSIFFATPLLVT. A disordered region spans residues 393 to 471; the sequence is RRTLGSQVGK…TGKRNNVGRR (79 aa). The span at 415–431 shows a compositional bias: polar residues; sequence KPQNQAESCADASSQEG. The span at 448–460 shows a compositional bias: low complexity; that stretch reads PGVRPVRPTGTRR. The span at 461 to 471 shows a compositional bias: basic residues; it reads PTGKRNNVGRR.

This sequence belongs to the SecD/SecF family. SecF subfamily. In terms of assembly, forms a complex with SecD. Part of the essential Sec protein translocation apparatus which comprises SecA, SecYEG and auxiliary proteins SecDF. Other proteins may also be involved.

The protein localises to the cell membrane. Its function is as follows. Part of the Sec protein translocase complex. Interacts with the SecYEG preprotein conducting channel. SecDF uses the proton motive force (PMF) to complete protein translocation after the ATP-dependent function of SecA. This is Protein translocase subunit SecF from Mycobacterium leprae (strain TN).